Reading from the N-terminus, the 133-residue chain is Helix-loop-helix protein 1 (133 aa).

The segment at 1-78 (MMLNSDTMEL…RRRATAKYRT (78 aa)) is disordered. Gly residues predominate over residues 25–39 (DCGGGPGPDGAGSGD). Residues 52–65 (ESGRKDLQHLSREE) show a composition bias toward basic and acidic residues. Residues 66 to 78 (RRRRRRATAKYRT) are compositionally biased toward basic residues. Residues 75-127 (KYRTAHATRERIRVEAFNLAFAELRKLLPTLPPDKKLSKIEILRLAICYISYL) form the bHLH domain.

In terms of assembly, efficient DNA binding requires dimerization with another bHLH protein.

It is found in the nucleus. Functionally, may serve as DNA-binding protein and may be involved in the control of cell-type determination, possibly within the developing nervous system. The sequence is that of Helix-loop-helix protein 1 (Nhlh1) from Mus musculus (Mouse).